Reading from the N-terminus, the 129-residue chain is Small ribosomal subunit protein uS9 (129 aa).

This sequence belongs to the universal ribosomal protein uS9 family.

The protein is Small ribosomal subunit protein uS9 of Helicobacter acinonychis (strain Sheeba).